A 574-amino-acid chain; its full sequence is Isocitrate dehydrogenase kinase/phosphatase (574 aa).

ATP contacts are provided by residues 315–321 (APGIRGM) and lysine 336. Aspartate 371 is a catalytic residue.

Belongs to the AceK family.

The protein resides in the cytoplasm. It carries out the reaction L-seryl-[isocitrate dehydrogenase] + ATP = O-phospho-L-seryl-[isocitrate dehydrogenase] + ADP + H(+). In terms of biological role, bifunctional enzyme which can phosphorylate or dephosphorylate isocitrate dehydrogenase (IDH) on a specific serine residue. This is a regulatory mechanism which enables bacteria to bypass the Krebs cycle via the glyoxylate shunt in response to the source of carbon. When bacteria are grown on glucose, IDH is fully active and unphosphorylated, but when grown on acetate or ethanol, the activity of IDH declines drastically concomitant with its phosphorylation. The chain is Isocitrate dehydrogenase kinase/phosphatase from Escherichia coli O81 (strain ED1a).